The chain runs to 376 residues: Flagellar P-ring protein 2 (376 aa).

The signal sequence occupies residues 1-19 (MTRLLLALILVVSAASAQA).

The protein belongs to the FlgI family. The basal body constitutes a major portion of the flagellar organelle and consists of four rings (L,P,S, and M) mounted on a central rod.

Its subcellular location is the periplasm. It localises to the bacterial flagellum basal body. Assembles around the rod to form the L-ring and probably protects the motor/basal body from shearing forces during rotation. This chain is Flagellar P-ring protein 2, found in Bradyrhizobium diazoefficiens (strain JCM 10833 / BCRC 13528 / IAM 13628 / NBRC 14792 / USDA 110).